The primary structure comprises 401 residues: Argininosuccinate synthase (401 aa).

9–17 (AYSGGLDTS) provides a ligand contact to ATP. Tyr-88 contacts L-citrulline. Gly-118 serves as a coordination point for ATP. Positions 120, 124, and 125 each coordinate L-aspartate. An L-citrulline-binding site is contributed by Asn-124. Residues Arg-128, Ser-177, Ser-186, Glu-262, and Tyr-274 each coordinate L-citrulline.

This sequence belongs to the argininosuccinate synthase family. Type 1 subfamily. As to quaternary structure, homotetramer.

The protein localises to the cytoplasm. It catalyses the reaction L-citrulline + L-aspartate + ATP = 2-(N(omega)-L-arginino)succinate + AMP + diphosphate + H(+). It functions in the pathway amino-acid biosynthesis; L-arginine biosynthesis; L-arginine from L-ornithine and carbamoyl phosphate: step 2/3. The polypeptide is Argininosuccinate synthase (Chlorobaculum parvum (strain DSM 263 / NCIMB 8327) (Chlorobium vibrioforme subsp. thiosulfatophilum)).